We begin with the raw amino-acid sequence, 338 residues long: Serpentine receptor class alpha-32 (338 aa).

Transmembrane regions (helical) follow at residues 30–50, 63–83, 120–140, 152–172, 199–219, 249–269, and 289–309; these read VYVI…IHAI, ITHL…SYTI, RFLF…VILF, GEIL…LLHL, LTSY…MMWY, LNSL…FVLA, and TTPY…QWIG.

This sequence belongs to the nematode receptor-like protein sra family.

It localises to the membrane. The chain is Serpentine receptor class alpha-32 (sra-32) from Caenorhabditis elegans.